We begin with the raw amino-acid sequence, 212 residues long: Translation initiation factor IF-3 (212 aa).

A disordered region spans residues 168–212; that stretch reads MAPKAPASPKKDKADRPEGDAGDTDMAAPAPAPAAAPETESAPSA. The span at 176 to 186 shows a compositional bias: basic and acidic residues; it reads PKKDKADRPEG. Positions 194–212 are enriched in low complexity; it reads AAPAPAPAAAPETESAPSA.

It belongs to the IF-3 family. In terms of assembly, monomer.

It localises to the cytoplasm. Its function is as follows. IF-3 binds to the 30S ribosomal subunit and shifts the equilibrium between 70S ribosomes and their 50S and 30S subunits in favor of the free subunits, thus enhancing the availability of 30S subunits on which protein synthesis initiation begins. This Deinococcus radiodurans (strain ATCC 13939 / DSM 20539 / JCM 16871 / CCUG 27074 / LMG 4051 / NBRC 15346 / NCIMB 9279 / VKM B-1422 / R1) protein is Translation initiation factor IF-3.